The following is a 340-amino-acid chain: Quinic acid degradation cluster protein x (340 aa).

5 residues coordinate Mg(2+): Glu90, Asp115, Leu117, Asp118, and Asp262. Substrate is bound at residue Glu90. Substrate-binding positions include 117–120 (LDGT) and Asp262.

This sequence belongs to the inositol monophosphatase superfamily.

Its function is as follows. Part of the qa gene cluster that mediates the catabolism of quinic acid (QA) and as such, allows the use of QA as a sole carbon source. Its function within the pathway has not been determined yet but it probably plays a regulatory role. The qa cluster encodes 3 inducible enymes (qa-2, qa-3 and qa-4) catalyzing the first three reactions in the catabolism of quinic acid to protocatechuic acid (also known as 3,4-Dihydroxybenzoic acid). The chain is Quinic acid degradation cluster protein x from Neurospora crassa (strain ATCC 24698 / 74-OR23-1A / CBS 708.71 / DSM 1257 / FGSC 987).